The following is a 75-amino-acid chain: Phytosulfokines (75 aa).

A signal peptide spans 1 to 22 (MSSKAITLLLIALLFSLSLAQA). A propeptide spanning residues 23–66 (ARPLQPADSTKSVHVIPEKVHDEACEGVGEEECLMRRTLTAHVD) is cleaved from the precursor. 2 positions are modified to sulfotyrosine: Y67 and Y69. The propeptide occupies 72-75 (DHNP).

It belongs to the phytosulfokine family. In terms of processing, sulfation is important for activity and for the binding to a putative membrane receptor. Deletion of the sulfate groups of Tyr-67 and Tyr-69 resulted in compounds with respectively 0.6% and 4% of the activity. PSK-alpha is produced by endopeptidase digestion. PSK-beta is produced from PSK-alpha by exopeptidase digestion.

The protein resides in the secreted. In terms of biological role, promotes plant cell differentiation, organogenesis and somatic embryogenesis as well as cell proliferation. The chain is Phytosulfokines (PSK) from Asparagus officinalis (Garden asparagus).